The primary structure comprises 282 residues: MRIDTVNVLLEALPYIKEFYGKTFVIKFGGSAMKQENAKKAFIQDIILLKYTGIKPIIVHGGGPAISQMMKDLGIEPVFKNGHRVTDEKTMEIVEMVLVGKINKEIVMNLNLHGGRAVGICGKDSKLIVAEKETKHGDIGYVGKVKKVNPEILHALIENDYIPVIAPVGIGEDGHSYNINADTAAAEIAKSLMAEKLILLTDVDGVLKGDKLISTLTPDEAEELIRDGTVTGGMIPKVECAVSAVRGGVGAVHIINGGLEHAILLEIFSRKGIGTMIKELEG.

Substrate-binding positions include 62-63 (GG), R84, and N178.

The protein belongs to the acetylglutamate kinase family. ArgB subfamily.

The protein resides in the cytoplasm. It carries out the reaction N-acetyl-L-glutamate + ATP = N-acetyl-L-glutamyl 5-phosphate + ADP. It participates in amino-acid biosynthesis; L-arginine biosynthesis; N(2)-acetyl-L-ornithine from L-glutamate: step 2/4. Functionally, catalyzes the ATP-dependent phosphorylation of N-acetyl-L-glutamate. The chain is Acetylglutamate kinase from Thermotoga sp. (strain RQ2).